Here is a 627-residue protein sequence, read N- to C-terminus: DNA mismatch repair protein MutL (627 aa).

The segment at 363 to 397 (FAEPAAREPVAPRYSPAPASGSRPAAPWPNAQPGY) is disordered. The segment covering 364–387 (AEPAAREPVAPRYSPAPASGSRPA) has biased composition (low complexity).

Belongs to the DNA mismatch repair MutL/HexB family.

This protein is involved in the repair of mismatches in DNA. It is required for dam-dependent methyl-directed DNA mismatch repair. May act as a 'molecular matchmaker', a protein that promotes the formation of a stable complex between two or more DNA-binding proteins in an ATP-dependent manner without itself being part of a final effector complex. The sequence is that of DNA mismatch repair protein MutL from Shigella flexneri serotype 5b (strain 8401).